The primary structure comprises 349 residues: Histidinol-phosphate aminotransferase (349 aa).

Lysine 206 carries the post-translational modification N6-(pyridoxal phosphate)lysine.

It belongs to the class-II pyridoxal-phosphate-dependent aminotransferase family. Histidinol-phosphate aminotransferase subfamily. Homodimer. Pyridoxal 5'-phosphate serves as cofactor.

The enzyme catalyses L-histidinol phosphate + 2-oxoglutarate = 3-(imidazol-4-yl)-2-oxopropyl phosphate + L-glutamate. It functions in the pathway amino-acid biosynthesis; L-histidine biosynthesis; L-histidine from 5-phospho-alpha-D-ribose 1-diphosphate: step 7/9. In Streptococcus mutans serotype c (strain ATCC 700610 / UA159), this protein is Histidinol-phosphate aminotransferase.